We begin with the raw amino-acid sequence, 264 residues long: Thiazole synthase (264 aa).

Lys-98 serves as the catalytic Schiff-base intermediate with DXP. 1-deoxy-D-xylulose 5-phosphate is bound by residues Gly-159, Ala-185–Gly-186, and Ala-207–Thr-208.

Belongs to the ThiG family. In terms of assembly, homotetramer. Forms heterodimers with either ThiH or ThiS.

The protein resides in the cytoplasm. It catalyses the reaction [ThiS sulfur-carrier protein]-C-terminal-Gly-aminoethanethioate + 2-iminoacetate + 1-deoxy-D-xylulose 5-phosphate = [ThiS sulfur-carrier protein]-C-terminal Gly-Gly + 2-[(2R,5Z)-2-carboxy-4-methylthiazol-5(2H)-ylidene]ethyl phosphate + 2 H2O + H(+). It participates in cofactor biosynthesis; thiamine diphosphate biosynthesis. Catalyzes the rearrangement of 1-deoxy-D-xylulose 5-phosphate (DXP) to produce the thiazole phosphate moiety of thiamine. Sulfur is provided by the thiocarboxylate moiety of the carrier protein ThiS. In vitro, sulfur can be provided by H(2)S. The sequence is that of Thiazole synthase from Mycobacterium ulcerans (strain Agy99).